A 104-amino-acid chain; its full sequence is MTYAIIEASGTQLWIEEGRYYDLNHIPVDPGQSIILGKVLLLNKNGEVTLGRPCIEGVTIKATVMRHLRGKKITVFKMKPKKKMRLKKGHRQELTRLMIDSITS.

It belongs to the bacterial ribosomal protein bL21 family. As to quaternary structure, part of the 50S ribosomal subunit.

The protein localises to the plastid. It is found in the chloroplast. Its function is as follows. This protein binds to 23S rRNA. This chain is Large ribosomal subunit protein bL21c, found in Pyropia yezoensis (Susabi-nori).